The primary structure comprises 549 residues: Fas-activated serine/threonine kinase (549 aa).

The segment at 1–30 is disordered; sequence MRRPRGEPGPRAPRPTEGATCAGPGESWSP. The RAP domain maps to 477–535; sequence VVLVLRERWHFCRDGRVLLGSRALRERHLGLMGYQLLPLPFEELESQRGLPQLKSYLRQ.

The protein belongs to the FAST protein kinase family. Interacts with TIA1; the interactions leads to TIA1 phosphorylation. Interacts with TIAR. In terms of processing, autophosphorylated on serine/threonine residues. Activated by dephosphorylation. Expressed in heart, brain, placenta, lung, liver, skeletal muscle, kidney and pancreas.

The protein resides in the mitochondrion matrix. It catalyses the reaction L-seryl-[Fas-activated protein] + ATP = O-phospho-L-seryl-[Fas-activated protein] + ADP + H(+). The enzyme catalyses L-threonyl-[Fas-activated protein] + ATP = O-phospho-L-threonyl-[Fas-activated protein] + ADP + H(+). The catalysed reaction is L-seryl-[protein] + ATP = O-phospho-L-seryl-[protein] + ADP + H(+). It carries out the reaction L-threonyl-[protein] + ATP = O-phospho-L-threonyl-[protein] + ADP + H(+). Functionally, phosphorylates the splicing regulator TIA1, thereby promoting the inclusion of FAS exon 6, which leads to an mRNA encoding a pro-apoptotic form of the receptor. Required for the biogenesis of some mitochondrial-encoded mRNAs, specifically stabilizes ND6 (NADH dehydrogenase complex subunit 6) mRNA, and regulates its levels. The sequence is that of Fas-activated serine/threonine kinase (FASTK) from Homo sapiens (Human).